A 122-amino-acid polypeptide reads, in one-letter code: Large ribosomal subunit protein uL24 (122 aa).

This sequence belongs to the universal ribosomal protein uL24 family. Part of the 50S ribosomal subunit.

In terms of biological role, one of two assembly initiator proteins, it binds directly to the 5'-end of the 23S rRNA, where it nucleates assembly of the 50S subunit. One of the proteins that surrounds the polypeptide exit tunnel on the outside of the subunit. This is Large ribosomal subunit protein uL24 from Trichodesmium erythraeum (strain IMS101).